Reading from the N-terminus, the 231-residue chain is Transmembrane gamma-carboxyglutamic acid protein 3 (231 aa).

The propeptide occupies 1–19; that stretch reads MAVFLEAKNAHAVLKRFPR. Positions 20-65 constitute a Gla domain; the sequence is ANEFLEELRQGTIERECMEEICSYEEVKEVFENKEKTMEFWKGYPN. Over 20-78 the chain is Extracellular; it reads ANEFLEELRQGTIERECMEEICSYEEVKEVFENKEKTMEFWKGYPNAVYSVRDPSQSSD. 13 positions are modified to 4-carboxyglutamate: glutamate 22, glutamate 25, glutamate 26, glutamate 33, glutamate 35, glutamate 38, glutamate 39, glutamate 44, glutamate 45, glutamate 48, glutamate 51, glutamate 54, and glutamate 58. Cysteines 36 and 41 form a disulfide. A helical transmembrane segment spans residues 79–101; that stretch reads AMYVVVPLLGVVLLIVIALFIIW. Residues 102–231 lie on the Cytoplasmic side of the membrane; the sequence is RCQLQKATRH…IVAASPSADK (130 aa). Disordered stretches follow at residues 140-165 and 184-231; these read HSQGESSGHREAGNNPQIVMGPSRGG and RLSS…SADK. The segment covering 201-212 has biased composition (polar residues); sequence QEGSSEEASVSY.

In terms of processing, gla residues are produced after subsequent post-translational modifications of glutamate by a vitamin K-dependent gamma-carboxylase.

The protein resides in the membrane. In Mus musculus (Mouse), this protein is Transmembrane gamma-carboxyglutamic acid protein 3 (Prrg3).